Consider the following 293-residue polypeptide: 4-hydroxy-tetrahydrodipicolinate synthase (293 aa).

A pyruvate-binding site is contributed by Thr-45. Tyr-133 (proton donor/acceptor) is an active-site residue. Residue Lys-162 is the Schiff-base intermediate with substrate of the active site. Ile-204 contributes to the pyruvate binding site.

This sequence belongs to the DapA family. Homotetramer; dimer of dimers.

The protein resides in the cytoplasm. It catalyses the reaction L-aspartate 4-semialdehyde + pyruvate = (2S,4S)-4-hydroxy-2,3,4,5-tetrahydrodipicolinate + H2O + H(+). Its pathway is amino-acid biosynthesis; L-lysine biosynthesis via DAP pathway; (S)-tetrahydrodipicolinate from L-aspartate: step 3/4. In terms of biological role, catalyzes the condensation of (S)-aspartate-beta-semialdehyde [(S)-ASA] and pyruvate to 4-hydroxy-tetrahydrodipicolinate (HTPA). The protein is 4-hydroxy-tetrahydrodipicolinate synthase of Brucella abortus biovar 1 (strain 9-941).